A 635-amino-acid chain; its full sequence is Threonine--tRNA ligase (635 aa).

Residues 1-61 (MIQITLPDSS…SQDSALSIVT (61 aa)) enclose the TGS domain. The tract at residues 242-533 (DHRKLGKELD…LIEEHAGALP (292 aa)) is catalytic. Residues Cys-333, His-384, and His-510 each contribute to the Zn(2+) site.

It belongs to the class-II aminoacyl-tRNA synthetase family. As to quaternary structure, homodimer. It depends on Zn(2+) as a cofactor.

It localises to the cytoplasm. It catalyses the reaction tRNA(Thr) + L-threonine + ATP = L-threonyl-tRNA(Thr) + AMP + diphosphate + H(+). Functionally, catalyzes the attachment of threonine to tRNA(Thr) in a two-step reaction: L-threonine is first activated by ATP to form Thr-AMP and then transferred to the acceptor end of tRNA(Thr). Also edits incorrectly charged L-seryl-tRNA(Thr). This is Threonine--tRNA ligase from Polaromonas naphthalenivorans (strain CJ2).